The primary structure comprises 114 residues: Ribonuclease P protein component (114 aa).

The protein belongs to the RnpA family. In terms of assembly, consists of a catalytic RNA component (M1 or rnpB) and a protein subunit.

The enzyme catalyses Endonucleolytic cleavage of RNA, removing 5'-extranucleotides from tRNA precursor.. In terms of biological role, RNaseP catalyzes the removal of the 5'-leader sequence from pre-tRNA to produce the mature 5'-terminus. It can also cleave other RNA substrates such as 4.5S RNA. The protein component plays an auxiliary but essential role in vivo by binding to the 5'-leader sequence and broadening the substrate specificity of the ribozyme. The chain is Ribonuclease P protein component from Borrelia hermsii (strain HS1 / DAH).